The chain runs to 579 residues: Thiol:disulfide interchange protein DsbD (579 aa).

Positions 1–16 are cleaved as a signal peptide; it reads MKKLFLFFTLIFTAFA. 2 disulfides stabilise this stretch: cysteine 124–cysteine 129 and cysteine 193–cysteine 315. A run of 8 helical transmembrane segments spans residues 178–198, 230–250, 254–274, 296–316, 337–357, 376–396, 397–417, and 420–440; these read IFGFFLLGLGLAFTPCVLPML, LTYTLLGLAVAAIGLPFQIAL, YVMIGLSILFVALALSMFGLF, GAFGGAFAMGMIAGLVASPCT, AATLYLLALGMGVPLMLITLF, FGFVMLALPVFLLSRILPEVW, EPRLWAGLATVFFIWFALQMS, and GFGYAIKIISFALAMVTVQPL. One can recognise a Thioredoxin domain in the interval 449 to 579; that stretch reads TTTQSAVENM…AFSNWLKALH (131 aa). Cysteine 495 and cysteine 498 are disulfide-bonded.

The protein belongs to the thioredoxin family. DsbD subfamily.

It is found in the cell inner membrane. The enzyme catalyses [protein]-dithiol + NAD(+) = [protein]-disulfide + NADH + H(+). The catalysed reaction is [protein]-dithiol + NADP(+) = [protein]-disulfide + NADPH + H(+). In terms of biological role, required to facilitate the formation of correct disulfide bonds in some periplasmic proteins and for the assembly of the periplasmic c-type cytochromes. Acts by transferring electrons from cytoplasmic thioredoxin to the periplasm. This transfer involves a cascade of disulfide bond formation and reduction steps. The chain is Thiol:disulfide interchange protein DsbD from Haemophilus influenzae (strain 86-028NP).